The sequence spans 62 residues: Large ribosomal subunit protein bL28 (62 aa).

It belongs to the bacterial ribosomal protein bL28 family.

The protein is Large ribosomal subunit protein bL28 of Helicobacter hepaticus (strain ATCC 51449 / 3B1).